The following is a 351-amino-acid chain: Peptide chain release factor 1 (351 aa).

At Gln-229 the chain carries N5-methylglutamine.

This sequence belongs to the prokaryotic/mitochondrial release factor family. Post-translationally, methylated by PrmC. Methylation increases the termination efficiency of RF1.

It localises to the cytoplasm. In terms of biological role, peptide chain release factor 1 directs the termination of translation in response to the peptide chain termination codons UAG and UAA. The protein is Peptide chain release factor 1 of Dinoroseobacter shibae (strain DSM 16493 / NCIMB 14021 / DFL 12).